The sequence spans 252 residues: Flagellar L-ring protein (252 aa).

The signal sequence occupies residues 1-25; that stretch reads MSKSVPLQRIVLVAALMATGGLAGG. Cys26 carries the N-palmitoyl cysteine lipid modification. Cys26 carries the S-diacylglycerol cysteine lipid modification.

The protein belongs to the FlgH family. In terms of assembly, the basal body constitutes a major portion of the flagellar organelle and consists of four rings (L,P,S, and M) mounted on a central rod.

It is found in the cell outer membrane. The protein resides in the bacterial flagellum basal body. Functionally, assembles around the rod to form the L-ring and probably protects the motor/basal body from shearing forces during rotation. The protein is Flagellar L-ring protein of Rhodopseudomonas palustris (strain ATCC BAA-98 / CGA009).